Consider the following 245-residue polypeptide: 5-oxoprolinase subunit A (245 aa).

Belongs to the LamB/PxpA family. In terms of assembly, forms a complex composed of PxpA, PxpB and PxpC.

The catalysed reaction is 5-oxo-L-proline + ATP + 2 H2O = L-glutamate + ADP + phosphate + H(+). Catalyzes the cleavage of 5-oxoproline to form L-glutamate coupled to the hydrolysis of ATP to ADP and inorganic phosphate. In Serratia proteamaculans (strain 568), this protein is 5-oxoprolinase subunit A.